Reading from the N-terminus, the 215-residue chain is Phosphatidylserine decarboxylase proenzyme (215 aa).

Residue S184 is the Schiff-base intermediate with substrate; via pyruvic acid of the active site. S184 is modified (pyruvic acid (Ser); by autocatalysis).

The protein belongs to the phosphatidylserine decarboxylase family. PSD-A subfamily. In terms of assembly, heterodimer of a large membrane-associated beta subunit and a small pyruvoyl-containing alpha subunit. The cofactor is pyruvate. In terms of processing, is synthesized initially as an inactive proenzyme. Formation of the active enzyme involves a self-maturation process in which the active site pyruvoyl group is generated from an internal serine residue via an autocatalytic post-translational modification. Two non-identical subunits are generated from the proenzyme in this reaction, and the pyruvate is formed at the N-terminus of the alpha chain, which is derived from the carboxyl end of the proenzyme. The post-translation cleavage follows an unusual pathway, termed non-hydrolytic serinolysis, in which the side chain hydroxyl group of the serine supplies its oxygen atom to form the C-terminus of the beta chain, while the remainder of the serine residue undergoes an oxidative deamination to produce ammonia and the pyruvoyl prosthetic group on the alpha chain.

Its subcellular location is the cell membrane. It carries out the reaction a 1,2-diacyl-sn-glycero-3-phospho-L-serine + H(+) = a 1,2-diacyl-sn-glycero-3-phosphoethanolamine + CO2. It functions in the pathway phospholipid metabolism; phosphatidylethanolamine biosynthesis; phosphatidylethanolamine from CDP-diacylglycerol: step 2/2. Functionally, catalyzes the formation of phosphatidylethanolamine (PtdEtn) from phosphatidylserine (PtdSer). This is Phosphatidylserine decarboxylase proenzyme from Ralstonia nicotianae (strain ATCC BAA-1114 / GMI1000) (Ralstonia solanacearum).